Reading from the N-terminus, the 457-residue chain is Interferon regulatory factor 7 (457 aa).

Positions 9–126 form a DNA-binding region, IRF tryptophan pentad repeat; sequence RVLFGDWLLG…DPHKVYELSR (118 aa). The residue at position 92 (lysine 92) is an N6-acetyllysine; by KAT2A and KAT2B. Residues 238 to 410 are necessary for the interaction with NMI; it reads RSLGFLDVTI…TLILVKLEPW (173 aa). Lysine 329 is covalently cross-linked (Glycyl lysine isopeptide (Lys-Gly) (interchain with G-Cter in ubiquitin)). Residues lysine 398 and lysine 400 each participate in a glycyl lysine isopeptide (Lys-Gly) (interchain with G-Cter in SUMO) cross-link. 3 positions are modified to phosphoserine: serine 425, serine 426, and serine 429. The residue at position 431 (serine 431) is a Phosphoserine; by TBK1 and IKKE. Phosphoserine occurs at positions 437, 438, and 441.

The protein belongs to the IRF family. In terms of assembly, monomer. Homodimer; phosphorylation-induced. Heterodimer with IRF3. Interacts with TICAM1 and TICAM2. Interacts with MYD88 and TRAF6. Interacts with NMI; the interaction is direct and leads to the inhibition of IRF7-mediated type I IFN production. Interacts with GBP4; preventing interaction between TRAF6 and IRF7, resulting in impaired TRAF6-mediated IRF7 ubiquitination. Interacts with TARBP2; this interaction prevents IRF7 phosphorylation and activation. In terms of processing, acetylation inhibits its DNA-binding ability and activity. Post-translationally, in response to a viral infection, phosphorylated by TBK1 and IKBKE1. Phosphorylation, and subsequent activation is inhibited by vaccinia virus protein E3. In TLR7- and TLR9-mediated signaling pathway, phosphorylated by IRAK1. TRAF6-mediated ubiquitination is required for IRF7 activation. TRIM35 mediates IRF7 'Lys-48'-linked polyubiquitination and subsequent proteasomal degradation. 'Lys-48'-linked polyubiquitination and subsequent proteasomal degradation is NMI-dependent in response to Sendai virus infection. Ubiquitinated by UBE3C, leading to its degradation. In terms of processing, sumoylated by TRIM28, which inhibits its transactivation activity. Post-translationally, 'Lys-63'-linked ubiquitination by NEURL3 promotes IRF7 activation.

The protein localises to the nucleus. The protein resides in the cytoplasm. Its activity is regulated as follows. In the absence of viral infection, maintained as a monomer in an autoinhibited state and phosphorylation disrupts this autoinhibition leading to the liberation of the DNA-binding and dimerization activities and its nuclear localization where it can activate type I IFN and ISG genes. In terms of biological role, key transcriptional regulator of type I interferon (IFN)-dependent immune responses and plays a critical role in the innate immune response against DNA and RNA viruses. Regulates the transcription of type I IFN genes (IFN-alpha and IFN-beta) and IFN-stimulated genes (ISG) by binding to an interferon-stimulated response element (ISRE) in their promoters. Can efficiently activate both the IFN-beta (IFNB) and the IFN-alpha (IFNA) genes and mediate their induction via both the virus-activated, MyD88-independent pathway and the TLR-activated, MyD88-dependent pathway. Induces transcription of ubiquitin hydrolase USP25 mRNA in response to lipopolysaccharide (LPS) or viral infection in a type I IFN-dependent manner. Required during both the early and late phases of the IFN gene induction but is more critical for the late than for the early phase. Exists in an inactive form in the cytoplasm of uninfected cells and following viral infection, double-stranded RNA (dsRNA), or toll-like receptor (TLR) signaling, becomes phosphorylated by IKBKE and TBK1 kinases. This induces a conformational change, leading to its dimerization and nuclear localization where along with other coactivators it can activate transcription of the type I IFN and ISG genes. Can also play a role in regulating adaptive immune responses by inducing PSMB9/LMP2 expression, either directly or through induction of IRF1. Binds to the Q promoter (Qp) of EBV nuclear antigen 1 a (EBNA1) and may play a role in the regulation of EBV latency. Can activate distinct gene expression programs in macrophages and regulate the anti-tumor properties of primary macrophages. This is Interferon regulatory factor 7 (Irf7) from Mus musculus (Mouse).